The following is a 961-amino-acid chain: Glycine dehydrogenase (decarboxylating) (961 aa).

Position 709 is an N6-(pyridoxal phosphate)lysine (Lys-709).

Belongs to the GcvP family. As to quaternary structure, the glycine cleavage system is composed of four proteins: P, T, L and H. It depends on pyridoxal 5'-phosphate as a cofactor.

The catalysed reaction is N(6)-[(R)-lipoyl]-L-lysyl-[glycine-cleavage complex H protein] + glycine + H(+) = N(6)-[(R)-S(8)-aminomethyldihydrolipoyl]-L-lysyl-[glycine-cleavage complex H protein] + CO2. Its function is as follows. The glycine cleavage system catalyzes the degradation of glycine. The P protein binds the alpha-amino group of glycine through its pyridoxal phosphate cofactor; CO(2) is released and the remaining methylamine moiety is then transferred to the lipoamide cofactor of the H protein. In Streptomyces griseus subsp. griseus (strain JCM 4626 / CBS 651.72 / NBRC 13350 / KCC S-0626 / ISP 5235), this protein is Glycine dehydrogenase (decarboxylating).